Here is a 5596-residue protein sequence, read N- to C-terminus: Midasin (5596 aa).

At Met1 the chain carries N-acetylmethionine. AAA-ATPase protomer stretches follow at residues 307-591, 659-978, 1048-1316, and 1362-1616; these read SVCK…TSKL, LIEQ…ASNP, KEPT…QEEI, and HIVW…NKMG. Residue 329–336 coordinates ATP; sequence GPIGCGKT. The segment at 517 to 537 is disordered; that stretch reads SSVGCEQAPEEVSEARRENKR. ATP-binding positions include 677 to 684 and 1084 to 1091; these read GETGTGKT and GETSVGKT. A Phosphothreonine modification is found at Thr1177. 1390–1397 serves as a coordination point for ATP; the sequence is GDTGCGKT. Lys1683 bears the N6-acetyllysine mark. AAA-ATPase protomer regions lie at residues 1738-1995 and 2053-2313; these read RLLR…AVFK and MKCV…IYIS. ATP-binding positions include 1753–1760 and 2066–2073; these read GSPGVGKT and GPASVGKT. Ser1754 bears the Phosphoserine mark. The interval 2418-4691 is linker; it reads SLRAHETWGD…EGEGMKDVSD (2274 aa). The segment at 3989–4008 is disordered; it reads LVESDKEEQPDFLPRPTDGA. Residue Thr4212 is modified to Phosphothreonine. Ser4538 is modified (phosphoserine). 2 disordered regions span residues 4669–4688 and 4700–5260; these read ATEF…GMKD and EDTF…SRES. Over residues 4702–4724 the composition is skewed to basic and acidic residues; it reads TFQKGQEKDKEDPDSKSDIKGED. Positions 4741–4757 are enriched in acidic residues; the sequence is ELEEQEEDDEKSDSEGG. Residues Ser4752 and Ser4754 each carry the phosphoserine modification. Positions 4758–4780 are enriched in basic and acidic residues; that stretch reads DLDKHMGDLNGEEADKLDERLWG. A compositionally biased stretch (acidic residues) spans 4781 to 4794; that stretch reads DDDEEEDEEEEDNK. Positions 4822–4834 are enriched in basic and acidic residues; the sequence is NKDKSQQDKKEEK. Over residues 4835–4844 the composition is skewed to acidic residues; sequence EEAEADDGGQ. Over residues 4845 to 4855 the composition is skewed to basic and acidic residues; it reads GEDKINEQIDE. Residues 4877-4888 are compositionally biased toward acidic residues; the sequence is EALDLPDDLNLD. Residue Ser4889 is modified to Phosphoserine. The span at 4896-4908 shows a compositional bias: acidic residues; sequence EDTDNEEGEEENP. Position 4898 is a phosphothreonine (Thr4898). Residues 4909–4928 are compositionally biased toward basic and acidic residues; sequence LEIKEKPEEAGHEAEERGET. Ser4937 and Ser4946 each carry phosphoserine. Acidic residues predominate over residues 4940–4966; it reads EPEEGPSEDDKAEGEEEMDTGADDQDG. Basic and acidic residues predominate over residues 4968–4989; sequence AAQHPEEHSEEQQQSVEEKDKE. Residues 5007–5021 are compositionally biased toward acidic residues; the sequence is QEEEEREDSDTEEQV. Residue Ser5015 is modified to Phosphoserine. Polar residues predominate over residues 5033–5046; sequence CGQTGVENMQNTQA. A compositionally biased stretch (basic and acidic residues) spans 5054-5064; sequence PEKEQGKEEHG. The span at 5088-5101 shows a compositional bias: basic residues; it reads KHTRKNTQSFKRKP. Residues 5105-5115 are compositionally biased toward basic and acidic residues; it reads DNERSMGDHNE. Residues 5132-5141 show a composition bias toward low complexity; sequence QGPAQQPQAQ. The span at 5181–5197 shows a compositional bias: acidic residues; it reads QEEEEIEDTLMDTEEQE. Composition is skewed to basic and acidic residues over residues 5198 to 5213 and 5233 to 5260; these read EFKA…EEIK and KTEE…SRES. Residues 5384–5583 enclose the VWFA domain; sequence QICLAIDDSS…ALPETLSDAL (200 aa).

It belongs to the midasin family. Associates with pre-60S ribosomes in the nucleoplasm. Interacts (via its hexameric AAA ATPase ring) with the PELP1 complex (via PELP1); the interaction is regulated by SUMO conjugation of PELP1 and is crucial for recruitment of MDN1 to the pre-ribosomal particle. Interacts (via VWFA/MIDAS domain) with WDR12 (via UBL domain). Interacts (via VWFA/MIDAS domain) with NLE1 (via UBL domain).

It is found in the nucleus. Its subcellular location is the nucleolus. The protein resides in the nucleoplasm. The protein localises to the cytoplasm. Functionally, nuclear chaperone required for maturation and nuclear export of pre-60S ribosome subunits. Functions at successive maturation steps to remove ribosomal factors at critical transition points, first driving the exit of early pre-60S particles from the nucleolus and then driving late pre-60S particles from the nucleus. At an early stage in 60S maturation, mediates the dissociation of the PeBoW complex (PES1-BOP1-WDR12) from early pre-60S particles, rendering them competent for export from the nucleolus to the nucleoplasm. Subsequently recruited to the nucleoplasmic particles through interaction with SUMO-conjugated PELP1 complex. This binding is only possible if the 5S RNP at the central protuberance has undergone the rotation to complete its maturation. This chain is Midasin (MDN1), found in Homo sapiens (Human).